The primary structure comprises 1174 residues: Carboxylic acid reductase (1174 aa).

Residues His-297, Ser-392, 413-414 (EG), Thr-418, Asp-491, 503-506 (YLDR), Lys-512, and Lys-612 each bind AMP. One can recognise a Carrier domain in the interval 651–726 (APVLVTVCRA…ALADYVEAAR (76 aa)). Position 685 is an O-(pantetheine 4'-phosphoryl)serine (Ser-685). NADP(+)-binding positions include 787–791 (TGFLG), Arg-814, Arg-824, 854–855 (DK), 880–882 (PAA), 919–920 (TS), Tyr-956, and Lys-960.

This sequence belongs to the ATP-dependent AMP-binding enzyme family. Carboxylic acid reductase subfamily. The cofactor is pantetheine 4'-phosphate.

The catalysed reaction is a carboxylate + ATP + NADPH + H(+) = an aldehyde + AMP + diphosphate + NADP(+). Functionally, catalyzes the ATP- and NADPH-dependent reduction of carboxylic acids to the corresponding aldehydes. Catalyzes the reduction of a wide range of aliphatic fatty acids (C6-C18) into their corresponding aldehydes. Can also reduce benzoate to benzaldehyde. Has a preference for NADPH over NADH as the electron donor. The chain is Carboxylic acid reductase from Mycobacterium marinum (strain ATCC BAA-535 / M).